A 181-amino-acid chain; its full sequence is DNA-packaging protein NU1 homolog (181 aa).

To phage lambda DNA packaging protein NU1.

This is DNA-packaging protein NU1 homolog (nohD) from Escherichia coli (strain K12).